The chain runs to 207 residues: Small ribosomal subunit protein uS4 (207 aa).

The interval 31–55 (KCKLDSKPGQHGRTSGARTSDYGTQ) is disordered. Positions 42-53 (GRTSGARTSDYG) are enriched in polar residues. The region spanning 97-160 (SRLDNVVYRM…KKQARIIEAL (64 aa)) is the S4 RNA-binding domain.

It belongs to the universal ribosomal protein uS4 family. Part of the 30S ribosomal subunit. Contacts protein S5. The interaction surface between S4 and S5 is involved in control of translational fidelity.

In terms of biological role, one of the primary rRNA binding proteins, it binds directly to 16S rRNA where it nucleates assembly of the body of the 30S subunit. Functionally, with S5 and S12 plays an important role in translational accuracy. This chain is Small ribosomal subunit protein uS4, found in Burkholderia vietnamiensis (strain G4 / LMG 22486) (Burkholderia cepacia (strain R1808)).